The chain runs to 475 residues: Glutamate--tRNA ligase (475 aa).

The short motif at 9-19 is the 'HIGH' region element; the sequence is PSPTGYLHVGG. Positions 240-244 match the 'KMSKS' region motif; the sequence is KLSKR. Position 243 (lysine 243) interacts with ATP.

It belongs to the class-I aminoacyl-tRNA synthetase family. Glutamate--tRNA ligase type 1 subfamily. In terms of assembly, monomer.

The protein localises to the cytoplasm. It catalyses the reaction tRNA(Glu) + L-glutamate + ATP = L-glutamyl-tRNA(Glu) + AMP + diphosphate. Functionally, catalyzes the attachment of glutamate to tRNA(Glu) in a two-step reaction: glutamate is first activated by ATP to form Glu-AMP and then transferred to the acceptor end of tRNA(Glu). The polypeptide is Glutamate--tRNA ligase (Vibrio campbellii (strain ATCC BAA-1116)).